The chain runs to 78 residues: COP9 signalosome complex subunit 5b (78 aa).

The protein belongs to the peptidase M67A family. CSN5 subfamily. As to quaternary structure, component of the CSN complex, probably composed of CSN1, CSN2, CSN3, CSN4, CSN5 (CSN5A or CSN5B), CSN6 (CSN6A or CSN6B), CSN7 and CSN8. A divalent metal cation is required as a cofactor.

Its subcellular location is the cytoplasm. The protein localises to the nucleus. In terms of biological role, probable protease subunit of the COP9 signalosome complex (CSN), a complex involved in various cellular and developmental processes such as photomorphogenesis and auxin and jasmonate responses. The CSN complex is an essential regulator of the ubiquitin (Ubl) conjugation pathway by mediating the deneddylation of the cullin subunits of the SCF-type E3 ligase complexes, leading to decrease the Ubl ligase activity of SCF. In the complex, it probably acts as the catalytic center that mediates the cleavage of Nedd8 from cullins. It however has no metalloprotease activity by itself and requires the other subunits of the CSN complex. The CSN complex is involved in repression of photomorphogenesis in darkness by regulating the activity of COP1-containing Ubl ligase complexes. The protein is COP9 signalosome complex subunit 5b (CSN5B) of Brassica oleracea (Wild cabbage).